We begin with the raw amino-acid sequence, 593 residues long: ATP-dependent lipid A-core flippase (593 aa).

A run of 6 helical transmembrane segments spans residues 33–53 (IGIV…EAGI), 75–95 (WYVP…QYTS), 137–157 (AIVF…VTLV), 164–184 (IFLL…VAVI), 262–282 (QPLT…IAVV), and 292–312 (GGFV…KHLI). Residues 37–320 (VLAVVTMGVV…LIDVNQPLQR (284 aa)) enclose the ABC transmembrane type-1 domain. The region spanning 352 to 586 (IEFRAVSFDY…GGLYAHLHRI (235 aa)) is the ABC transporter domain. Position 386-393 (386-393 (GPSGSGKT)) interacts with ATP.

This sequence belongs to the ABC transporter superfamily. Lipid exporter (TC 3.A.1.106) family. Homodimer.

Its subcellular location is the cell inner membrane. It catalyses the reaction ATP + H2O + lipid A-core oligosaccharideSide 1 = ADP + phosphate + lipid A-core oligosaccharideSide 2.. Involved in lipopolysaccharide (LPS) biosynthesis. Translocates lipid A-core from the inner to the outer leaflet of the inner membrane. Transmembrane domains (TMD) form a pore in the inner membrane and the ATP-binding domain (NBD) is responsible for energy generation. This is ATP-dependent lipid A-core flippase from Burkholderia orbicola (strain AU 1054).